The primary structure comprises 302 residues: MTLSASLSPQPFGRIVTAMVTPFDSSGAVDFQLAARLARHLVEQGSDGLLVCGTTGESPTLSWDEQLKLLEAVREAVGSSAQVLAGTGSNSTSEAVKATREAAAVGADGALVVVPYYNKPPQEGLEVHFRAIAEAAPTLPLMLYNIPGRTGCHIEAETVACLMDCPNIVSFKAASGTTEEVTALRLACGSRLAIYSGDDGLTLPMLSVGAVGVVSVASHVAGPQIRAMIDAYVEGEVGAALAQHEQLIPLFKALFATTNPIPVKAALEINGWSVGAPRPPLSSLPEAMRTTLSNTLSALRQT.

A pyruvate-binding site is contributed by threonine 55. Tyrosine 144 (proton donor/acceptor) is an active-site residue. Lysine 172 (schiff-base intermediate with substrate) is an active-site residue. A pyruvate-binding site is contributed by valine 214.

Belongs to the DapA family. As to quaternary structure, homotetramer; dimer of dimers.

Its subcellular location is the cytoplasm. It catalyses the reaction L-aspartate 4-semialdehyde + pyruvate = (2S,4S)-4-hydroxy-2,3,4,5-tetrahydrodipicolinate + H2O + H(+). It participates in amino-acid biosynthesis; L-lysine biosynthesis via DAP pathway; (S)-tetrahydrodipicolinate from L-aspartate: step 3/4. In terms of biological role, catalyzes the condensation of (S)-aspartate-beta-semialdehyde [(S)-ASA] and pyruvate to 4-hydroxy-tetrahydrodipicolinate (HTPA). The polypeptide is 4-hydroxy-tetrahydrodipicolinate synthase (Synechococcus sp. (strain CC9902)).